Consider the following 214-residue polypeptide: MTSEATLKLMQWLSPAYPVGAFAYSHGLEGAVSEGHVRDGDTLSDWLSDLLTHGGARSDALLLACAYRTETAESLAEIDDTARAFCPSAERLQETDLQGAAFCRTTAAIWDTALPSLTYPVAVGHAARLNDVALDLTLNMYLHAFLSNLVAAGQRLLSLGQTEAQQRLNACGPQLRRTVDAALSGTIDDLFGASFAADIASMRHETQYSRIFRS.

It belongs to the UreF family. UreD, UreF and UreG form a complex that acts as a GTP-hydrolysis-dependent molecular chaperone, activating the urease apoprotein by helping to assemble the nickel containing metallocenter of UreC. The UreE protein probably delivers the nickel.

The protein localises to the cytoplasm. Required for maturation of urease via the functional incorporation of the urease nickel metallocenter. In Ruegeria sp. (strain TM1040) (Silicibacter sp.), this protein is Urease accessory protein UreF.